The chain runs to 279 residues: Ribose-phosphate pyrophosphokinase (279 aa).

ATP contacts are provided by residues 31–33 (DGE) and 88–89 (RQ). Mg(2+) contacts are provided by histidine 121 and aspartate 159. Lysine 182 is a catalytic residue. D-ribose 5-phosphate is bound by residues arginine 184, aspartate 208, and 212–216 (STGGT).

Belongs to the ribose-phosphate pyrophosphokinase family. Class III (archaeal) subfamily. Requires Mg(2+) as cofactor.

It localises to the cytoplasm. The catalysed reaction is D-ribose 5-phosphate + ATP = 5-phospho-alpha-D-ribose 1-diphosphate + AMP + H(+). The protein operates within metabolic intermediate biosynthesis; 5-phospho-alpha-D-ribose 1-diphosphate biosynthesis; 5-phospho-alpha-D-ribose 1-diphosphate from D-ribose 5-phosphate (route I): step 1/1. In terms of biological role, involved in the biosynthesis of the central metabolite phospho-alpha-D-ribosyl-1-pyrophosphate (PRPP) via the transfer of pyrophosphoryl group from ATP to 1-hydroxyl of ribose-5-phosphate (Rib-5-P). The sequence is that of Ribose-phosphate pyrophosphokinase from Pyrococcus furiosus (strain ATCC 43587 / DSM 3638 / JCM 8422 / Vc1).